The sequence spans 152 residues: Small ribosomal subunit protein uS19 (152 aa).

This sequence belongs to the universal ribosomal protein uS19 family.

Its function is as follows. Protein S19 forms a complex with S13 that binds strongly to the 16S ribosomal RNA. The sequence is that of Small ribosomal subunit protein uS19 (rps19) from Methanocaldococcus jannaschii (strain ATCC 43067 / DSM 2661 / JAL-1 / JCM 10045 / NBRC 100440) (Methanococcus jannaschii).